The sequence spans 111 residues: Estrogen receptor (111 aa).

A disordered region spans residues 1 to 42; the sequence is PSGYAVREAGPPAYYRPNSDNRRQGGRERLASTSDKGSMAVE. The tract at residues 1 to 49 is modulating; that stretch reads PSGYAVREAGPPAYYRPNSDNRRQGGRERLASTSDKGSMAVESAKETRY. Residues 19-30 are compositionally biased toward basic and acidic residues; it reads SDNRRQGGRERL. Residue Ser-32 is modified to Phosphoserine. 2 consecutive NR C4-type zinc fingers follow at residues 50–70 and 86–110; these read CAVC…CEGC and CPAT…LRKC. Residues 50-111 constitute a DNA-binding region (nuclear receptor); sequence CAVCNDYASG…CQACRLRKCY (62 aa).

It belongs to the nuclear hormone receptor family. NR3 subfamily. In terms of assembly, binds DNA as a homodimer. Can form a heterodimer with ESR2. Interacts with coactivator NCOA5. Interacts with PELP1, the interaction is enhanced by 17-beta-estradiol; the interaction increases ESR1 transcriptional activity. Interacts with NCOA7; the interaction is ligand-inducible. Interacts with AKAP13, CUEDC2, HEXIM1, KDM5A, MAP1S, SMARD1, and UBE1C. Interacts with MUC1; the interaction is stimulated by 7 beta-estradiol (E2) and enhances ESR1-mediated transcription. Interacts with DNTTIP2, and UIMC1. Interacts with KMT2D/MLL2. Interacts with ATAD2; the interaction is enhanced by estradiol. Interacts with KIF18A and LDB1. Interacts with RLIM (via its C-terminus). Interacts with MACROD1. Interacts with SH2D4A and PLCG. Interacts with SH2D4A; the interaction blocks binding to PLCG and inhibits estrogen-induced cell proliferation. Interacts with DYNLL1. Interacts with CCDC62; the interaction requires estradiol and appears to enhance the transcription of target genes. Interacts with NR2C1; the interaction prevents homodimerization of ESR1 and suppresses its transcriptional activity and cell growth. Interacts with DNAAF4. Interacts with PRMT2. Interacts with RBFOX2. Interacts with EP300; the interaction is estrogen-dependent and enhanced by CITED1. Interacts with CITED1; the interaction is estrogen-dependent. Interacts with FAM120B, FOXL2, PHB2 and SLC30A9. Interacts with coactivators NCOA3 and NCOA6. Interacts with STK3/MST2 only in the presence of SAV1 and vice-versa. Binds to CSNK1D. Interacts with NCOA2; NCOA2 can interact with ESR1 AF-1 and AF-2 domains simultaneously and mediate their transcriptional synergy. Interacts with DDX5. Interacts with NCOA1; the interaction seems to require a self-association of N-terminal and C-terminal regions. Interacts with ZNF366, DDX17, NFKB1, RELA, SP1 and SP3. Interacts with NRIP1. Interacts with GPER1; the interaction occurs in an estrogen-dependent manner. Interacts with CLOCK and the interaction is stimulated by estrogen. Interacts with TRIP4 (ufmylated); estrogen dependent. Interacts with LMTK3; the interaction phosphorylates ESR1 (in vitro) and protects it against proteasomal degradation. Interacts with CCAR2 (via N-terminus) in a ligand-independent manner. Interacts with ZFHX3. Interacts with SFR1 in a ligand-dependent and -independent manner. Interacts with DCAF13, LATS1 and DCAF1; regulates ESR1 ubiquitination and ubiquitin-mediated proteasomal degradation. Interacts (via DNA-binding domain) with POU4F2 (C-terminus); this interaction increases the estrogen receptor ESR1 transcriptional activity in a DNA- and ligand 17-beta-estradiol-independent manner. Interacts with ESRRB isoform 1. Interacts with UBE3A and WBP2. Interacts with GTF2B. Interacts with RBM39. In the absence of hormonal ligand, interacts with TACC1. Interacts with PI3KR1 or PI3KR2 and PTK2/FAK1. Interacts with SRC. Interacts with BAG1; the interaction is promoted in the absence of estradiol (17-beta-estradiol/E2). Interacts with and ubiquitinated by STUB1; the interaction is promoted in the absence of estradiol (17-beta-estradiol/E2). Interacts with NEDD8. Ubiquitinated; regulated by LATS1 via DCAF1 it leads to ESR1 proteasomal degradation. Deubiquitinated by OTUB1. Ubiquitinated by STUB1/CHIP; in the CA1 hippocampal region following loss of endogenous circulating estradiol (17-beta-estradiol/E2). Ubiquitinated by UBR5, leading to its degradation: UBR5 specifically recognizes and binds ligand-bound ESR1 when it is not associated with coactivators (NCOAs). In presence of NCOAs, the UBR5-degron is not accessible, preventing its ubiquitination and degradation. In terms of processing, dimethylated by PRMT1. Demethylated by JMJD6. Post-translationally, palmitoylated by ZDHHC7 and ZDHHC21. This modification is required for plasma membrane targeting and for rapid intracellular signaling via ERK and AKT kinases and cAMP generation, but not for signaling mediated by the nuclear hormone receptor. Phosphorylated by cyclin A/CDK2 and CK1. Phosphorylation probably enhances transcriptional activity. Dephosphorylation by PPP5C inhibits its transactivation activity. Phosphorylated by LMTK3 (in vitro).

Its subcellular location is the nucleus. The protein resides in the cytoplasm. The protein localises to the golgi apparatus. It is found in the cell membrane. Its function is as follows. Nuclear hormone receptor. The steroid hormones and their receptors are involved in the regulation of eukaryotic gene expression and affect cellular proliferation and differentiation in target tissues. Ligand-dependent nuclear transactivation involves either direct homodimer binding to a palindromic estrogen response element (ERE) sequence or association with other DNA-binding transcription factors, such as AP-1/c-Jun, c-Fos, ATF-2, Sp1 and Sp3, to mediate ERE-independent signaling. Ligand binding induces a conformational change allowing subsequent or combinatorial association with multiprotein coactivator complexes through LXXLL motifs of their respective components. Mutual transrepression occurs between the estrogen receptor (ER) and NF-kappa-B in a cell-type specific manner. Decreases NF-kappa-B DNA-binding activity and inhibits NF-kappa-B-mediated transcription from the IL6 promoter and displace RELA/p65 and associated coregulators from the promoter. Recruited to the NF-kappa-B response element of the CCL2 and IL8 promoters and can displace CREBBP. Present with NF-kappa-B components RELA/p65 and NFKB1/p50 on ERE sequences. Can also act synergistically with NF-kappa-B to activate transcription involving respective recruitment adjacent response elements; the function involves CREBBP. Can activate the transcriptional activity of TFF1. Also mediates membrane-initiated estrogen signaling involving various kinase cascades. Essential for MTA1-mediated transcriptional regulation of BRCA1 and BCAS3. Maintains neuronal survival in response to ischemic reperfusion injury when in the presence of circulating estradiol (17-beta-estradiol/E2). This is Estrogen receptor (ESR1) from Ovis aries (Sheep).